The chain runs to 573 residues: PCNA-interacting partner (573 aa).

The interval 463–511 is disordered; that stretch reads VSEGAQPSVGKARLETSSENVHVDRSKDDKGPRKSTKRKLAKSKQPGVR. A compositionally biased stretch (basic and acidic residues) spans 474 to 494; sequence ARLETSSENVHVDRSKDDKGP. Residues 495-504 show a composition bias toward basic residues; the sequence is RKSTKRKLAK.

This sequence belongs to the PARI family. As to quaternary structure, interacts with RAD51 and PCNA. Interacts with PARP1. Interacts with TASOR. As to expression, present in testis (at protein level). Expressed in testis, gastrointestinal tract (jejunum, ileum, and colon) and immune system (thymus and spleen). Weakly expressed in lung, kidney, pituitary gland and muscle.

The protein localises to the cytoplasm. It localises to the nucleus. Functionally, required to suppress inappropriate homologous recombination, thereby playing a central role DNA repair and in the maintenance of genomic stability. Antagonizes homologous recombination by interfering with the formation of the RAD51-DNA homologous recombination structure. Positively regulate the poly(ADP-ribosyl)ation activity of PARP1; however such function may be indirect. Binds single-strand DNA and poly(A) homopolymers. This is PCNA-interacting partner (Parpbp) from Rattus norvegicus (Rat).